Reading from the N-terminus, the 349-residue chain is Protein-glutamate methylesterase/protein-glutamine glutaminase (349 aa).

The region spanning 5-122 (RVLSVDDSAL…REGMLAYSEM (118 aa)) is the Response regulatory domain. D56 carries the post-translational modification 4-aspartylphosphate. A CheB-type methylesterase domain is found at 152 to 344 (LLSSEKLIAI…QQMLATISAG (193 aa)). Active-site residues include S164, H190, and D286.

Belongs to the CheB family. Phosphorylated by CheA. Phosphorylation of the N-terminal regulatory domain activates the methylesterase activity.

The protein localises to the cytoplasm. It catalyses the reaction [protein]-L-glutamate 5-O-methyl ester + H2O = L-glutamyl-[protein] + methanol + H(+). It carries out the reaction L-glutaminyl-[protein] + H2O = L-glutamyl-[protein] + NH4(+). Functionally, involved in chemotaxis. Part of a chemotaxis signal transduction system that modulates chemotaxis in response to various stimuli. Catalyzes the demethylation of specific methylglutamate residues introduced into the chemoreceptors (methyl-accepting chemotaxis proteins or MCP) by CheR. Also mediates the irreversible deamidation of specific glutamine residues to glutamic acid. The sequence is that of Protein-glutamate methylesterase/protein-glutamine glutaminase from Shigella flexneri.